The primary structure comprises 239 residues: MTAPLSLFVTGTDTEIGKTFVSAALLHGFARHGLRAAALKPVAAGAYERDGVWRNEDADQLDAAANVVLPPELRTPFLLKAPAAPHIVAAQEGVTLDIDTIVACHREALTRADVVVVEGAGGFRVPMNDTQDLADLAVALGVPVVLVVGVRLGCINHALLTADAIAARGLKLAGWVANHVDPAMSFPDENIATMRDWLAREHGAPLLGRIPHMSPAAPESAAAMLDIAALVETLRTAQP.

15 to 20 (EIGKTF) serves as a coordination point for ATP. Thr19 serves as a coordination point for Mg(2+). Lys40 is an active-site residue. ATP is bound by residues Asp57, 118-121 (EGAG), and 178-179 (NH). Residues Asp57 and Glu118 each coordinate Mg(2+).

This sequence belongs to the dethiobiotin synthetase family. Homodimer. Requires Mg(2+) as cofactor.

Its subcellular location is the cytoplasm. It catalyses the reaction (7R,8S)-7,8-diammoniononanoate + CO2 + ATP = (4R,5S)-dethiobiotin + ADP + phosphate + 3 H(+). It functions in the pathway cofactor biosynthesis; biotin biosynthesis; biotin from 7,8-diaminononanoate: step 1/2. In terms of biological role, catalyzes a mechanistically unusual reaction, the ATP-dependent insertion of CO2 between the N7 and N8 nitrogen atoms of 7,8-diaminopelargonic acid (DAPA, also called 7,8-diammoniononanoate) to form a ureido ring. The sequence is that of ATP-dependent dethiobiotin synthetase BioD from Burkholderia lata (strain ATCC 17760 / DSM 23089 / LMG 22485 / NCIMB 9086 / R18194 / 383).